The chain runs to 299 residues: Protease HtpX homolog (299 aa).

A run of 2 helical transmembrane segments spans residues 14-34 (WLLL…VGNL) and 39-59 (GFGG…TMIF). Position 143 (H143) interacts with Zn(2+). The active site involves E144. Position 147 (H147) interacts with Zn(2+). 2 consecutive transmembrane segments (helical) span residues 153 to 173 (IRIS…AGMA) and 198 to 218 (IVFL…ATLV). Position 227 (E227) interacts with Zn(2+).

The protein belongs to the peptidase M48B family. The cofactor is Zn(2+).

The protein resides in the cell membrane. In Streptococcus thermophilus (strain ATCC BAA-250 / LMG 18311), this protein is Protease HtpX homolog.